The sequence spans 263 residues: uncharacterized protein (263 aa).

31–38 is a binding site for ATP; it reads GPTGSGKT.

This sequence belongs to the CbbQ/NirQ/NorQ/GpvN family.

This is an uncharacterized protein from Staphylococcus aureus (strain NCTC 8325 / PS 47).